The following is a 156-amino-acid chain: Small ribosomal subunit protein uS7 (156 aa).

This sequence belongs to the universal ribosomal protein uS7 family. In terms of assembly, part of the 30S ribosomal subunit. Contacts proteins S9 and S11.

In terms of biological role, one of the primary rRNA binding proteins, it binds directly to 16S rRNA where it nucleates assembly of the head domain of the 30S subunit. Is located at the subunit interface close to the decoding center, probably blocks exit of the E-site tRNA. This Desulfatibacillum aliphaticivorans protein is Small ribosomal subunit protein uS7.